The primary structure comprises 136 residues: MAFSTGGNRGPMADINVTPLVDVMLVLLIIFIVTAPIMTYPIAVDLPQRVLNPPPQTTEPPPPIELRIDASNQVFWNNSPTPVAQLQQKMEEVVQADPTNQPELRIDANEDAEYEVMAKVLAAAKNSQMKKIGFMQ.

Topologically, residues 1 to 23 (MAFSTGGNRGPMADINVTPLVDV) are cytoplasmic. Residues 24 to 44 (MLVLLIIFIVTAPIMTYPIAV) traverse the membrane as a helical segment. Residues 45–136 (DLPQRVLNPP…SQMKKIGFMQ (92 aa)) are Periplasmic-facing.

Belongs to the ExbD/TolR family. As to quaternary structure, the accessory proteins ExbB and ExbD seem to form a complex with TonB.

Its subcellular location is the cell inner membrane. Functionally, involved in the TonB-dependent energy-dependent transport of various receptor-bound substrates. The protein is Biopolymer transport protein exbD2 (exbD2) of Xanthomonas campestris pv. campestris (strain ATCC 33913 / DSM 3586 / NCPPB 528 / LMG 568 / P 25).